The following is a 215-amino-acid chain: 3-isopropylmalate dehydratase small subunit (215 aa).

Belongs to the LeuD family. LeuD type 1 subfamily. Heterodimer of LeuC and LeuD.

The enzyme catalyses (2R,3S)-3-isopropylmalate = (2S)-2-isopropylmalate. Its pathway is amino-acid biosynthesis; L-leucine biosynthesis; L-leucine from 3-methyl-2-oxobutanoate: step 2/4. In terms of biological role, catalyzes the isomerization between 2-isopropylmalate and 3-isopropylmalate, via the formation of 2-isopropylmaleate. The chain is 3-isopropylmalate dehydratase small subunit from Polynucleobacter necessarius subsp. necessarius (strain STIR1).